We begin with the raw amino-acid sequence, 227 residues long: Cytochrome c oxidase subunit 2 (227 aa).

The Mitochondrial intermembrane portion of the chain corresponds to 1–14; sequence MACPVQLGFQDAAS. Residues 15–45 traverse the membrane as a helical segment; it reads PIMEELTYFHDHTLMIVFLISSLVLYIISLM. Over 46–59 the chain is Mitochondrial matrix; sequence LTTELTHTSTMDAQ. A helical membrane pass occupies residues 60–87; the sequence is EVETVWTILPAVILILIALPSLRILYMM. Topologically, residues 88 to 227 are mitochondrial intermembrane; it reads DEITTPSLTL…HFEEWLLAML (140 aa). The Cu cation site is built by histidine 161, cysteine 196, glutamate 198, cysteine 200, histidine 204, and methionine 207. A Mg(2+)-binding site is contributed by glutamate 198.

Belongs to the cytochrome c oxidase subunit 2 family. In terms of assembly, component of the cytochrome c oxidase (complex IV, CIV), a multisubunit enzyme composed of 14 subunits. The complex is composed of a catalytic core of 3 subunits MT-CO1, MT-CO2 and MT-CO3, encoded in the mitochondrial DNA, and 11 supernumerary subunits COX4I, COX5A, COX5B, COX6A, COX6B, COX6C, COX7A, COX7B, COX7C, COX8 and NDUFA4, which are encoded in the nuclear genome. The complex exists as a monomer or a dimer and forms supercomplexes (SCs) in the inner mitochondrial membrane with NADH-ubiquinone oxidoreductase (complex I, CI) and ubiquinol-cytochrome c oxidoreductase (cytochrome b-c1 complex, complex III, CIII), resulting in different assemblies (supercomplex SCI(1)III(2)IV(1) and megacomplex MCI(2)III(2)IV(2)). Found in a complex with TMEM177, COA6, COX18, COX20, SCO1 and SCO2. Interacts with TMEM177 in a COX20-dependent manner. Interacts with COX20. Interacts with COX16. It depends on Cu cation as a cofactor.

The protein resides in the mitochondrion inner membrane. The enzyme catalyses 4 Fe(II)-[cytochrome c] + O2 + 8 H(+)(in) = 4 Fe(III)-[cytochrome c] + 2 H2O + 4 H(+)(out). Its function is as follows. Component of the cytochrome c oxidase, the last enzyme in the mitochondrial electron transport chain which drives oxidative phosphorylation. The respiratory chain contains 3 multisubunit complexes succinate dehydrogenase (complex II, CII), ubiquinol-cytochrome c oxidoreductase (cytochrome b-c1 complex, complex III, CIII) and cytochrome c oxidase (complex IV, CIV), that cooperate to transfer electrons derived from NADH and succinate to molecular oxygen, creating an electrochemical gradient over the inner membrane that drives transmembrane transport and the ATP synthase. Cytochrome c oxidase is the component of the respiratory chain that catalyzes the reduction of oxygen to water. Electrons originating from reduced cytochrome c in the intermembrane space (IMS) are transferred via the dinuclear copper A center (CU(A)) of subunit 2 and heme A of subunit 1 to the active site in subunit 1, a binuclear center (BNC) formed by heme A3 and copper B (CU(B)). The BNC reduces molecular oxygen to 2 water molecules using 4 electrons from cytochrome c in the IMS and 4 protons from the mitochondrial matrix. This chain is Cytochrome c oxidase subunit 2 (MT-CO2), found in Cheirogaleus medius (Fat-tailed dwarf lemur).